We begin with the raw amino-acid sequence, 396 residues long: Ribosomal RNA large subunit methyltransferase I (396 aa).

Residues 2 to 79 (SVFIYLVKGR…KEETVDLDFF (78 aa)) enclose the PUA domain.

Belongs to the methyltransferase superfamily. RlmI family.

It localises to the cytoplasm. It carries out the reaction cytidine(1962) in 23S rRNA + S-adenosyl-L-methionine = 5-methylcytidine(1962) in 23S rRNA + S-adenosyl-L-homocysteine + H(+). Functionally, specifically methylates the cytosine at position 1962 (m5C1962) of 23S rRNA. In Aeromonas salmonicida (strain A449), this protein is Ribosomal RNA large subunit methyltransferase I.